The chain runs to 340 residues: Glycerol-3-phosphate dehydrogenase [NAD(P)+] (340 aa).

NADPH contacts are provided by Ser15, Tyr16, His36, and Lys110. Positions 110, 139, and 141 each coordinate sn-glycerol 3-phosphate. Ala143 is an NADPH binding site. 5 residues coordinate sn-glycerol 3-phosphate: Lys195, Asp248, Ser258, Arg259, and Asn260. Catalysis depends on Lys195, which acts as the Proton acceptor. Arg259 lines the NADPH pocket. NADPH is bound by residues Val283 and Glu285.

It belongs to the NAD-dependent glycerol-3-phosphate dehydrogenase family.

It localises to the cytoplasm. It carries out the reaction sn-glycerol 3-phosphate + NAD(+) = dihydroxyacetone phosphate + NADH + H(+). The enzyme catalyses sn-glycerol 3-phosphate + NADP(+) = dihydroxyacetone phosphate + NADPH + H(+). It participates in membrane lipid metabolism; glycerophospholipid metabolism. Catalyzes the reduction of the glycolytic intermediate dihydroxyacetone phosphate (DHAP) to sn-glycerol 3-phosphate (G3P), the key precursor for phospholipid synthesis. In Baumannia cicadellinicola subsp. Homalodisca coagulata, this protein is Glycerol-3-phosphate dehydrogenase [NAD(P)+].